We begin with the raw amino-acid sequence, 370 residues long: DNA polymerase IV (370 aa).

The UmuC domain maps to 14-198; sequence IIHIDMDAFF…LPIEKFYGVG (185 aa). Positions 18 and 116 each coordinate Mg(2+). Residue Glu117 is part of the active site.

The protein belongs to the DNA polymerase type-Y family. As to quaternary structure, monomer. Mg(2+) is required as a cofactor.

Its subcellular location is the cytoplasm. The catalysed reaction is DNA(n) + a 2'-deoxyribonucleoside 5'-triphosphate = DNA(n+1) + diphosphate. In terms of biological role, poorly processive, error-prone DNA polymerase involved in untargeted mutagenesis. Copies undamaged DNA at stalled replication forks, which arise in vivo from mismatched or misaligned primer ends. These misaligned primers can be extended by PolIV. Exhibits no 3'-5' exonuclease (proofreading) activity. May be involved in translesional synthesis, in conjunction with the beta clamp from PolIII. In Streptococcus mutans serotype c (strain ATCC 700610 / UA159), this protein is DNA polymerase IV.